The following is a 208-amino-acid chain: ATP-dependent Clp protease proteolytic subunit (208 aa).

S107 (nucleophile) is an active-site residue. H132 is a catalytic residue.

It belongs to the peptidase S14 family. Fourteen ClpP subunits assemble into 2 heptameric rings which stack back to back to give a disk-like structure with a central cavity, resembling the structure of eukaryotic proteasomes.

It localises to the cytoplasm. It carries out the reaction Hydrolysis of proteins to small peptides in the presence of ATP and magnesium. alpha-casein is the usual test substrate. In the absence of ATP, only oligopeptides shorter than five residues are hydrolyzed (such as succinyl-Leu-Tyr-|-NHMec, and Leu-Tyr-Leu-|-Tyr-Trp, in which cleavage of the -Tyr-|-Leu- and -Tyr-|-Trp bonds also occurs).. In terms of biological role, cleaves peptides in various proteins in a process that requires ATP hydrolysis. Has a chymotrypsin-like activity. Plays a major role in the degradation of misfolded proteins. This chain is ATP-dependent Clp protease proteolytic subunit, found in Methylorubrum extorquens (strain CM4 / NCIMB 13688) (Methylobacterium extorquens).